A 477-amino-acid polypeptide reads, in one-letter code: tRNA-2-methylthio-N(6)-dimethylallyladenosine synthase (477 aa).

The MTTase N-terminal domain occupies 13-130 (GGLFIKTYGC…LPAMIEEALA (118 aa)). Cys-22, Cys-59, Cys-93, Cys-178, Cys-182, and Cys-185 together coordinate [4Fe-4S] cluster. One can recognise a Radical SAM core domain in the interval 164–396 (ESNGVSAFVS…QAMLNEQTAA (233 aa)). One can recognise a TRAM domain in the interval 399-462 (EGMVGTTQRV…ANSLKGKLVA (64 aa)).

It belongs to the methylthiotransferase family. MiaB subfamily. As to quaternary structure, monomer. [4Fe-4S] cluster serves as cofactor.

It localises to the cytoplasm. The enzyme catalyses N(6)-dimethylallyladenosine(37) in tRNA + (sulfur carrier)-SH + AH2 + 2 S-adenosyl-L-methionine = 2-methylsulfanyl-N(6)-dimethylallyladenosine(37) in tRNA + (sulfur carrier)-H + 5'-deoxyadenosine + L-methionine + A + S-adenosyl-L-homocysteine + 2 H(+). In terms of biological role, catalyzes the methylthiolation of N6-(dimethylallyl)adenosine (i(6)A), leading to the formation of 2-methylthio-N6-(dimethylallyl)adenosine (ms(2)i(6)A) at position 37 in tRNAs that read codons beginning with uridine. The sequence is that of tRNA-2-methylthio-N(6)-dimethylallyladenosine synthase from Hydrogenovibrio crunogenus (strain DSM 25203 / XCL-2) (Thiomicrospira crunogena).